A 78-amino-acid polypeptide reads, in one-letter code: uncharacterized protein (78 aa).

Transmembrane regions (helical) follow at residues 12–32 (LVSV…ICVV) and 51–71 (GVGA…VAVH).

Its subcellular location is the cell membrane. This is an uncharacterized protein from Treponema pallidum (strain Nichols).